The sequence spans 101 residues: NAD(P)H-quinone oxidoreductase subunit 4L, chloroplastic (101 aa).

3 helical membrane passes run 2-22 (ILEH…YGLI), 32-52 (MCLE…SDFF), and 61-81 (IFSI…LAIV).

It belongs to the complex I subunit 4L family. As to quaternary structure, NDH is composed of at least 16 different subunits, 5 of which are encoded in the nucleus.

Its subcellular location is the plastid. It localises to the chloroplast thylakoid membrane. The enzyme catalyses a plastoquinone + NADH + (n+1) H(+)(in) = a plastoquinol + NAD(+) + n H(+)(out). The catalysed reaction is a plastoquinone + NADPH + (n+1) H(+)(in) = a plastoquinol + NADP(+) + n H(+)(out). NDH shuttles electrons from NAD(P)H:plastoquinone, via FMN and iron-sulfur (Fe-S) centers, to quinones in the photosynthetic chain and possibly in a chloroplast respiratory chain. The immediate electron acceptor for the enzyme in this species is believed to be plastoquinone. Couples the redox reaction to proton translocation, and thus conserves the redox energy in a proton gradient. In Eucalyptus globulus subsp. globulus (Tasmanian blue gum), this protein is NAD(P)H-quinone oxidoreductase subunit 4L, chloroplastic.